The chain runs to 94 residues: Co-chaperonin GroES (94 aa).

Belongs to the GroES chaperonin family. In terms of assembly, heptamer of 7 subunits arranged in a ring. Interacts with the chaperonin GroEL.

The protein localises to the cytoplasm. In terms of biological role, together with the chaperonin GroEL, plays an essential role in assisting protein folding. The GroEL-GroES system forms a nano-cage that allows encapsulation of the non-native substrate proteins and provides a physical environment optimized to promote and accelerate protein folding. GroES binds to the apical surface of the GroEL ring, thereby capping the opening of the GroEL channel. The sequence is that of Co-chaperonin GroES from Bacillus cytotoxicus (strain DSM 22905 / CIP 110041 / 391-98 / NVH 391-98).